We begin with the raw amino-acid sequence, 679 residues long: DNA-directed RNA polymerase subunit beta' (679 aa).

Cys69, Cys71, Cys87, and Cys90 together coordinate Zn(2+). Mg(2+)-binding residues include Asp489, Asp491, and Asp493.

It belongs to the RNA polymerase beta' chain family. RpoC1 subfamily. In terms of assembly, in plastids the minimal PEP RNA polymerase catalytic core is composed of four subunits: alpha, beta, beta', and beta''. When a (nuclear-encoded) sigma factor is associated with the core the holoenzyme is formed, which can initiate transcription. Requires Mg(2+) as cofactor. Zn(2+) serves as cofactor.

The protein localises to the plastid. Its subcellular location is the chloroplast. The enzyme catalyses RNA(n) + a ribonucleoside 5'-triphosphate = RNA(n+1) + diphosphate. Its function is as follows. DNA-dependent RNA polymerase catalyzes the transcription of DNA into RNA using the four ribonucleoside triphosphates as substrates. This Oenothera argillicola (Appalachian evening primrose) protein is DNA-directed RNA polymerase subunit beta'.